The primary structure comprises 490 residues: Ribulose bisphosphate carboxylase large chain (490 aa).

The substrate site is built by Asn127 and Thr177. The active-site Proton acceptor is the Lys179. Substrate is bound at residue Lys181. The Mg(2+) site is built by Lys205, Asp207, and Glu208. An N6-carboxylysine modification is found at Lys205. His297 (proton acceptor) is an active-site residue. Arg298, His330, and Ser382 together coordinate substrate.

The protein belongs to the RuBisCO large chain family. Type I subfamily. Heterohexadecamer of 8 large chains and 8 small chains. Mg(2+) is required as a cofactor.

Its subcellular location is the plastid. The protein resides in the chloroplast. It catalyses the reaction 2 (2R)-3-phosphoglycerate + 2 H(+) = D-ribulose 1,5-bisphosphate + CO2 + H2O. The catalysed reaction is D-ribulose 1,5-bisphosphate + O2 = 2-phosphoglycolate + (2R)-3-phosphoglycerate + 2 H(+). In terms of biological role, ruBisCO catalyzes two reactions: the carboxylation of D-ribulose 1,5-bisphosphate, the primary event in carbon dioxide fixation, as well as the oxidative fragmentation of the pentose substrate in the photorespiration process. Both reactions occur simultaneously and in competition at the same active site. The chain is Ribulose bisphosphate carboxylase large chain from Thalassiosira nordenskioeldii (Marine diatom).